Here is a 557-residue protein sequence, read N- to C-terminus: Dihydroxy-acid dehydratase (557 aa).

D78 lines the Mg(2+) pocket. C119 lines the [2Fe-2S] cluster pocket. Mg(2+) is bound by residues D120 and K121. K121 bears the N6-carboxylysine mark. C192 provides a ligand contact to [2Fe-2S] cluster. E442 lines the Mg(2+) pocket. S468 serves as the catalytic Proton acceptor.

This sequence belongs to the IlvD/Edd family. As to quaternary structure, homodimer. It depends on [2Fe-2S] cluster as a cofactor. Mg(2+) is required as a cofactor.

The catalysed reaction is (2R)-2,3-dihydroxy-3-methylbutanoate = 3-methyl-2-oxobutanoate + H2O. It carries out the reaction (2R,3R)-2,3-dihydroxy-3-methylpentanoate = (S)-3-methyl-2-oxopentanoate + H2O. It functions in the pathway amino-acid biosynthesis; L-isoleucine biosynthesis; L-isoleucine from 2-oxobutanoate: step 3/4. Its pathway is amino-acid biosynthesis; L-valine biosynthesis; L-valine from pyruvate: step 3/4. Functions in the biosynthesis of branched-chain amino acids. Catalyzes the dehydration of (2R,3R)-2,3-dihydroxy-3-methylpentanoate (2,3-dihydroxy-3-methylvalerate) into 2-oxo-3-methylpentanoate (2-oxo-3-methylvalerate) and of (2R)-2,3-dihydroxy-3-methylbutanoate (2,3-dihydroxyisovalerate) into 2-oxo-3-methylbutanoate (2-oxoisovalerate), the penultimate precursor to L-isoleucine and L-valine, respectively. The sequence is that of Dihydroxy-acid dehydratase from Bacillus cereus (strain ZK / E33L).